The primary structure comprises 392 residues: Succinate--CoA ligase [ADP-forming] subunit beta (392 aa).

Residues 9-248 (KDILKKFGVS…TNEEDPFEVE (240 aa)) form the ATP-grasp domain. ATP-binding positions include lysine 50, 57–59 (GRG), glutamate 103, methionine 106, and glutamate 111. Residues asparagine 203 and aspartate 217 each coordinate Mg(2+). Residues asparagine 268 and 325-327 (GIV) contribute to the substrate site.

This sequence belongs to the succinate/malate CoA ligase beta subunit family. Heterotetramer of two alpha and two beta subunits. The cofactor is Mg(2+).

It carries out the reaction succinate + ATP + CoA = succinyl-CoA + ADP + phosphate. The catalysed reaction is GTP + succinate + CoA = succinyl-CoA + GDP + phosphate. It functions in the pathway carbohydrate metabolism; tricarboxylic acid cycle; succinate from succinyl-CoA (ligase route): step 1/1. Functionally, succinyl-CoA synthetase functions in the citric acid cycle (TCA), coupling the hydrolysis of succinyl-CoA to the synthesis of either ATP or GTP and thus represents the only step of substrate-level phosphorylation in the TCA. The beta subunit provides nucleotide specificity of the enzyme and binds the substrate succinate, while the binding sites for coenzyme A and phosphate are found in the alpha subunit. This is Succinate--CoA ligase [ADP-forming] subunit beta from Chlorobium limicola (strain DSM 245 / NBRC 103803 / 6330).